Consider the following 89-residue polypeptide: Small ribosomal subunit protein uS15 (89 aa).

This sequence belongs to the universal ribosomal protein uS15 family. As to quaternary structure, part of the 30S ribosomal subunit. Forms a bridge to the 50S subunit in the 70S ribosome, contacting the 23S rRNA.

One of the primary rRNA binding proteins, it binds directly to 16S rRNA where it helps nucleate assembly of the platform of the 30S subunit by binding and bridging several RNA helices of the 16S rRNA. Its function is as follows. Forms an intersubunit bridge (bridge B4) with the 23S rRNA of the 50S subunit in the ribosome. The sequence is that of Small ribosomal subunit protein uS15 from Kocuria rhizophila (strain ATCC 9341 / DSM 348 / NBRC 103217 / DC2201).